The chain runs to 195 residues: Protein SYM1 (195 aa).

4 helical membrane passes run 17-39 (LITN…QFFF), 59-78 (RAII…WYKF), 99-121 (STLL…PLYY), and 168-190 (PVQF…LSYV).

Belongs to the peroxisomal membrane protein PXMP2/4 family.

The protein resides in the mitochondrion inner membrane. May be involved in cellular response to stress. Required to maintain mitochondrial DNA (mtDNA) integrity and stability. In Candida albicans (strain SC5314 / ATCC MYA-2876) (Yeast), this protein is Protein SYM1 (SYM1).